The sequence spans 236 residues: uncharacterized protein (236 aa).

The 233-residue stretch at 4–236 folds into the GP-PDE domain; it reads QFLIAYRGYS…VKFQITAQIY (233 aa).

This sequence to glycerophosphoryl diester phosphodiesterases (EC 3.1.4.46). It to M.genitalium MG293.

This is an uncharacterized protein from Mycoplasma genitalium (strain ATCC 33530 / DSM 19775 / NCTC 10195 / G37) (Mycoplasmoides genitalium).